The following is a 164-amino-acid chain: Pheromone-binding protein (164 aa).

The first 22 residues, Met1–Ala22, serve as a signal peptide directing secretion. 3 disulfides stabilise this stretch: Cys41-Cys76, Cys72-Cys130, and Cys119-Cys139.

This sequence belongs to the PBP/GOBP family. In terms of assembly, homodimer. In terms of tissue distribution, antenna.

This major soluble protein in olfactory sensilla of male moths serves to solubilize the extremely hydrophobic pheromone molecules such as bombykol and to transport pheromone through the aqueous lymph to receptors located on olfactory cilia. This Bombyx mori (Silk moth) protein is Pheromone-binding protein.